A 160-amino-acid chain; its full sequence is Nutritionally-regulated adipose and cardiac enriched protein homolog (160 aa).

The segment at 1–69 is disordered; sequence MRTAAGAVSP…AKPQRTSRRV (69 aa). Basic and acidic residues-rich tracts occupy residues 12–25 and 33–42; these read SRPETRRQTRKNEE and CRAEREDNRK. The helical transmembrane segment at 101 to 121 threads the bilayer; it reads GGSLLLQLCVCVLLVLALGLY.

It is found in the cell membrane. This chain is Nutritionally-regulated adipose and cardiac enriched protein homolog (NRAC), found in Homo sapiens (Human).